The primary structure comprises 284 residues: 2-dehydro-3-deoxyphosphooctonate aldolase (284 aa).

Belongs to the KdsA family.

It localises to the cytoplasm. It catalyses the reaction D-arabinose 5-phosphate + phosphoenolpyruvate + H2O = 3-deoxy-alpha-D-manno-2-octulosonate-8-phosphate + phosphate. Its pathway is carbohydrate biosynthesis; 3-deoxy-D-manno-octulosonate biosynthesis; 3-deoxy-D-manno-octulosonate from D-ribulose 5-phosphate: step 2/3. The protein operates within bacterial outer membrane biogenesis; lipopolysaccharide biosynthesis. This chain is 2-dehydro-3-deoxyphosphooctonate aldolase, found in Serratia proteamaculans (strain 568).